A 41-amino-acid polypeptide reads, in one-letter code: Histone H3.2 (41 aa).

Residues 1-41 (MARTKQTARKSTGAKAPRKQLASKAARKSAPATGGIKKPHR) form a disordered region.

The protein belongs to the histone H3 family. As to quaternary structure, the nucleosome is a histone octamer containing two molecules each of H2A, H2B, H3 and H4 assembled in one H3-H4 heterotetramer and two H2A-H2B heterodimers. The octamer wraps approximately 147 bp of DNA.

The protein resides in the nucleus. Its subcellular location is the chromosome. In terms of biological role, core component of nucleosome. Nucleosomes wrap and compact DNA into chromatin, limiting DNA accessibility to the cellular machineries which require DNA as a template. Histones thereby play a central role in transcription regulation, DNA repair, DNA replication and chromosomal stability. DNA accessibility is regulated via a complex set of post-translational modifications of histones, also called histone code, and nucleosome remodeling. The chain is Histone H3.2 from Tetrahymena australis.